Reading from the N-terminus, the 148-residue chain is F420H(2)-dependent quinone reductase MT1609 (148 aa).

Coenzyme F420-(gamma-Glu)n-binding positions include A46–T48, R52–M57, V68–L71, V79–N83, and Y125.

The protein belongs to the F420H(2)-dependent quinone reductase family.

The protein localises to the cell membrane. The enzyme catalyses oxidized coenzyme F420-(gamma-L-Glu)(n) + a quinol + H(+) = reduced coenzyme F420-(gamma-L-Glu)(n) + a quinone. Its function is as follows. Involved in a F420-dependent anti-oxidant mechanism that protects M.tuberculosis against oxidative stress and bactericidal agents. Catalyzes the F420H(2)-dependent two-electron reduction of quinones to dihydroquinones, thereby preventing the formation of cytotoxic semiquinones obtained by the one-electron reduction pathway. In vitro, catalyzes the reduction of menadione to menadiol; since menaquinone is the sole quinone electron carrier in the respiratory chain in M.tuberculosis, the physiological electron acceptor for Fqr-mediated F420H(2) oxidation is therefore likely to be the endogenous menaquinone found in the membrane fraction of M.tuberculosis. This chain is F420H(2)-dependent quinone reductase MT1609, found in Mycobacterium tuberculosis (strain CDC 1551 / Oshkosh).